The primary structure comprises 97 residues: Co-chaperonin GroES (97 aa).

This sequence belongs to the GroES chaperonin family. Heptamer of 7 subunits arranged in a ring. Interacts with the chaperonin GroEL.

Its subcellular location is the cytoplasm. In terms of biological role, together with the chaperonin GroEL, plays an essential role in assisting protein folding. The GroEL-GroES system forms a nano-cage that allows encapsulation of the non-native substrate proteins and provides a physical environment optimized to promote and accelerate protein folding. GroES binds to the apical surface of the GroEL ring, thereby capping the opening of the GroEL channel. The polypeptide is Co-chaperonin GroES (Buchnera aphidicola subsp. Pemphigus spyrothecae).